A 572-amino-acid chain; its full sequence is MGFRINTNIGALNAHANSVVNARELDKSLSRLSSGLRINSAADDASGMAIADSLRSQAATLGQAINNGNDAIGILQTADKAMDEQLKILDTIKTKATQAAQDGQSLKTRTMLQADINRLMEELDNIANTTSFNGKQLLSGNFINQEFQIGASSNQTIKATIGATQSSKIGLTRFETGGRISSSGEVQFTLKNYNGIDDFQFQKVVISTSVGTGLGALAEEINKSADKTGVRATFTVETRGIAAVRAGTTSDTFAINGVTIGQVAYEDGDGNGALVAAINSVKDTTGVEASIDANGQLLLTSREGRGIKIDGNIGGGAFINADMKENYGRLSLVKNDGKDILISGSNLSSAGFGATQFISQASVSLRESKGRFDANIADAMGFGSANKGVVLGGYSSVSAYMSSAGSGFSSGSGYSVGSGKNYSTGFANAIAISAASQLSTVYNVSAGSGFSSGSTLSQFATMKTTAFGVKDETAGVTTLKGAMAVMDIAETATTNLDQIRADIGSVQNQLQVTINNITVTQVNVKAAESTIRDVDFAAESANFSKYNILAQSGSYAMSQANAVQQNVLKLLQ.

It belongs to the bacterial flagellin family. As to quaternary structure, heteromer of flaA and flaB.

Its subcellular location is the secreted. The protein localises to the bacterial flagellum. Its function is as follows. Flagellin is the subunit protein which polymerizes to form the filaments of bacterial flagella. The chain is Flagellin B (flaB) from Campylobacter jejuni subsp. jejuni serotype O:2 (strain ATCC 700819 / NCTC 11168).